The following is a 394-amino-acid chain: Phosphopentomutase (394 aa).

Mn(2+) contacts are provided by D13, D286, H291, D327, H328, and H339.

Belongs to the phosphopentomutase family. Mn(2+) is required as a cofactor.

It localises to the cytoplasm. The enzyme catalyses 2-deoxy-alpha-D-ribose 1-phosphate = 2-deoxy-D-ribose 5-phosphate. It catalyses the reaction alpha-D-ribose 1-phosphate = D-ribose 5-phosphate. Its pathway is carbohydrate degradation; 2-deoxy-D-ribose 1-phosphate degradation; D-glyceraldehyde 3-phosphate and acetaldehyde from 2-deoxy-alpha-D-ribose 1-phosphate: step 1/2. Isomerase that catalyzes the conversion of deoxy-ribose 1-phosphate (dRib-1-P) and ribose 1-phosphate (Rib-1-P) to deoxy-ribose 5-phosphate (dRib-5-P) and ribose 5-phosphate (Rib-5-P), respectively. The protein is Phosphopentomutase of Bacillus cereus (strain AH187).